Reading from the N-terminus, the 242-residue chain is Guanylate kinase (242 aa).

Residues 22–200 (GLLIVMTGAS…AVRELQAVQR (179 aa)) enclose the Guanylate kinase-like domain. Position 29–36 (29–36 (GASGVGKG)) interacts with ATP.

It belongs to the guanylate kinase family.

The protein resides in the cytoplasm. It carries out the reaction GMP + ATP = GDP + ADP. Functionally, essential for recycling GMP and indirectly, cGMP. This chain is Guanylate kinase, found in Deinococcus geothermalis (strain DSM 11300 / CIP 105573 / AG-3a).